A 359-amino-acid chain; its full sequence is Peptide chain release factor 1 (359 aa).

Residue Gln236 is modified to N5-methylglutamine.

It belongs to the prokaryotic/mitochondrial release factor family. Post-translationally, methylated by PrmC. Methylation increases the termination efficiency of RF1.

It localises to the cytoplasm. Its function is as follows. Peptide chain release factor 1 directs the termination of translation in response to the peptide chain termination codons UAG and UAA. This chain is Peptide chain release factor 1, found in Streptococcus pyogenes serotype M1.